The following is a 648-amino-acid chain: MEYINTRQKEILYLLLSEPDDYLVVQDFADRVQCSEKTIRNDLKVIEDYLNEHSHAQLIRKPGLGVYLHIEEQERTWLSQQLHTEHFSSRQRSDKERMLHIAYDLLMNPKPVSAKDIAARHFVNRSSIKKDLYAVEEWLKRFDLTLVSRQRLGLKVEGNERNKRKALARISDLIHNTAFTSQFIKSKFLHYEVDFVTKEIKSLQKKHSLYFTDETFESLLLHTLLMVRRIKMKQPISLSPKEMAAVKKKKEYQWTFACLQRLEPVFAIRFPEEEAVYLTLHILGGKVRYPLQTEENLENAVLPKVVGHLINRVSELKMMDFHKDQDLINGLNIHLNTVLQRLSYDLSVANPMLNDIKKMYPYLFHLIIDVLEDINQTFDLHIPEEEAAYLTLHFQAAIERMQGSSETHKKAVIVCHMGIGMSQLLRTKIERKYHQIAVMACIAKADLKDYIKKHEDIDLVISTIALENITVPHIVVSPLLEPGEEKKLSAFIRQLGESHRQKQKTFQMLNNTTPFLVFLQQEAEHRYKLIEQLATALFEKGYVDKDYAVHAVMREKMSATNIGSGIAIPHANAKFIKQSAIAIATLKEPLEWGNEKVSLVFMLAVKHEDQTMTKQLFSELSYLSEQPAFVQKLTKETNVMTFLSHLDY.

PRD domains lie at 187–292 and 297–404; these read KFLH…YPLQ and LENA…MQGS. Phosphohistidine; by HPr occurs at positions 222, 281, 334, and 393. The PTS EIIB type-2 domain occupies 409–500; sequence KKAVIVCHMG…FIRQLGESHR (92 aa). The residue at position 415 (cysteine 415) is a Phosphocysteine; by EIIA. A PTS EIIA type-2 domain is found at 510–648; the sequence is NNTTPFLVFL…VMTFLSHLDY (139 aa). Histidine 570 carries the post-translational modification Phosphohistidine; by EIIB.

Belongs to the transcriptional antiterminator BglG family.

The catalysed reaction is D-mannose(out) + N(pros)-phospho-L-histidyl-[protein] = D-mannose 6-phosphate(in) + L-histidyl-[protein]. The regulatory activity of ManR is modulated by phosphorylation and dephosphorylation of the various ManR domains. It becomes activated via phosphoryl group transfer from PEP, EI and HPr on the two conserved histidine residues in the PRD 2 domain, whereas phosphorylation of the EIIA-like domain on His-570 by the PTS EIIB-Man domain of ManP inactivates ManR. In terms of biological role, positively regulates the expression of the mannose operon that consists of three genes, manP, manA, and yjdF, which are responsible for the transport and utilization of mannose. Also activates its own expression. This is Transcriptional regulator ManR (manR) from Bacillus subtilis (strain 168).